The primary structure comprises 180 residues: ATP-dependent protease subunit HslV (180 aa).

Residue Thr-6 is part of the active site. The Na(+) site is built by Ala-164, Cys-167, and Thr-170.

The protein belongs to the peptidase T1B family. HslV subfamily. As to quaternary structure, a double ring-shaped homohexamer of HslV is capped on each side by a ring-shaped HslU homohexamer. The assembly of the HslU/HslV complex is dependent on binding of ATP.

The protein localises to the cytoplasm. It catalyses the reaction ATP-dependent cleavage of peptide bonds with broad specificity.. Its activity is regulated as follows. Allosterically activated by HslU binding. Functionally, protease subunit of a proteasome-like degradation complex believed to be a general protein degrading machinery. The sequence is that of ATP-dependent protease subunit HslV from Borrelia recurrentis (strain A1).